We begin with the raw amino-acid sequence, 283 residues long: E3 ubiquitin-protein ligase SGR9, amyloplastic (283 aa).

The N-terminal 32 residues, 1 to 32 (MEDENTTIIMASLSALSPSHLTNLTHSILSIS), are a transit peptide targeting the amyloplast. Residues 214 to 255 (CVICKEEMSEGRDVCEMPCQHFFHWKCILPWLSKKNTCPFCR) form an RING-type; atypical zinc finger.

In terms of processing, auto-ubiquitinated as part of the enzymatic reaction. In terms of tissue distribution, expressed in seedlings, hypocotyls, roots and stems. Present especially in hypocotyl and inflorescence endodermis, as well as in root cap columella, tissues that act as statocytes.

Its subcellular location is the plastid. The protein resides in the amyloplast. The enzyme catalyses S-ubiquitinyl-[E2 ubiquitin-conjugating enzyme]-L-cysteine + [acceptor protein]-L-lysine = [E2 ubiquitin-conjugating enzyme]-L-cysteine + N(6)-ubiquitinyl-[acceptor protein]-L-lysine.. Its pathway is protein modification; protein ubiquitination. E3 ubiquitin-protein ligase which accepts ubiquitin from an E2 ubiquitin-conjugating enzyme in the form of a thioester and then directly transfers the ubiquitin to targeted substrates. Modulates amyloplast dynamics and sedimentation in statocytes during inflorescence, hypocotyl and root gravitropism, probably by regulating amyloplast interaction with actin filaments (AFs) in endodermal cells. The sequence is that of E3 ubiquitin-protein ligase SGR9, amyloplastic (SGR9) from Arabidopsis thaliana (Mouse-ear cress).